Consider the following 221-residue polypeptide: Transcription repressor OFP8 (221 aa).

Over residues 124–138 (EDEGDKEESEDDDSD) the composition is skewed to acidic residues. Residues 124 to 147 (EDEGDKEESEDDDSDTLFSSRSFS) form a disordered region. Residues 158 to 217 (VVKKSKDPYEDFRTSMVEMIVERQIFAPAELQQLLQCFLSLNSRQHHKVIVQVFLEIYAT) form the OVATE domain.

In terms of tissue distribution, expressed in roots, rosette and cauline leaves, shoots, stems, flower buds and siliques.

The protein localises to the nucleus. Transcriptional repressor that regulates multiple aspects of plant growth and development through the regulation of BEL1-LIKE (BLH) and KNOX TALE (KNAT) homeodomain transcription factors. The polypeptide is Transcription repressor OFP8 (OFP8) (Arabidopsis thaliana (Mouse-ear cress)).